Consider the following 273-residue polypeptide: Dermonecrotic toxin LarSicTox-alphaIB1aii (273 aa).

His5 is a catalytic residue. Residues Glu25 and Asp27 each coordinate Mg(2+). His41 (nucleophile) is an active-site residue. Intrachain disulfides connect Cys45–Cys51 and Cys47–Cys190. Mg(2+) is bound at residue Asp85. Residue Asn250 is glycosylated (N-linked (GlcNAc...) asparagine).

Belongs to the arthropod phospholipase D family. Class II subfamily. Mg(2+) serves as cofactor. Expressed by the venom gland.

The protein resides in the secreted. The catalysed reaction is an N-(acyl)-sphingosylphosphocholine = an N-(acyl)-sphingosyl-1,3-cyclic phosphate + choline. It catalyses the reaction an N-(acyl)-sphingosylphosphoethanolamine = an N-(acyl)-sphingosyl-1,3-cyclic phosphate + ethanolamine. It carries out the reaction a 1-acyl-sn-glycero-3-phosphocholine = a 1-acyl-sn-glycero-2,3-cyclic phosphate + choline. The enzyme catalyses a 1-acyl-sn-glycero-3-phosphoethanolamine = a 1-acyl-sn-glycero-2,3-cyclic phosphate + ethanolamine. In terms of biological role, dermonecrotic toxins cleave the phosphodiester linkage between the phosphate and headgroup of certain phospholipids (sphingolipid and lysolipid substrates), forming an alcohol (often choline) and a cyclic phosphate. This toxin acts on sphingomyelin (SM). It may also act on ceramide phosphoethanolamine (CPE), lysophosphatidylcholine (LPC) and lysophosphatidylethanolamine (LPE), but not on lysophosphatidylserine (LPS), and lysophosphatidylglycerol (LPG). It acts by transphosphatidylation, releasing exclusively cyclic phosphate products as second products. Induces dermonecrosis, hemolysis, increased vascular permeability, edema, inflammatory response, and platelet aggregation. This Loxosceles arizonica (Arizona brown spider) protein is Dermonecrotic toxin LarSicTox-alphaIB1aii.